A 588-amino-acid polypeptide reads, in one-letter code: Aspartate--tRNA ligase (588 aa).

Glutamate 174 provides a ligand contact to L-aspartate. Positions 198–201 (QLFK) are aspartate. Residue arginine 220 coordinates L-aspartate. Residues 220 to 222 (RDE) and glutamine 229 contribute to the ATP site. L-aspartate is bound at residue histidine 448. ATP is bound at residue glutamate 482. An L-aspartate-binding site is contributed by arginine 489. ATP is bound at residue 534 to 537 (GIDR).

The protein belongs to the class-II aminoacyl-tRNA synthetase family. Type 1 subfamily. Homodimer.

The protein localises to the cytoplasm. It carries out the reaction tRNA(Asp) + L-aspartate + ATP = L-aspartyl-tRNA(Asp) + AMP + diphosphate. Functionally, catalyzes the attachment of L-aspartate to tRNA(Asp) in a two-step reaction: L-aspartate is first activated by ATP to form Asp-AMP and then transferred to the acceptor end of tRNA(Asp). The polypeptide is Aspartate--tRNA ligase (Xanthomonas euvesicatoria pv. vesicatoria (strain 85-10) (Xanthomonas campestris pv. vesicatoria)).